The primary structure comprises 212 residues: ATP-dependent dethiobiotin synthetase BioD (212 aa).

13–18 (GIGKTV) provides a ligand contact to ATP. Mg(2+) is bound at residue Thr17. Lys33 is an active-site residue. Substrate is bound at residue Ser37. Glu100 provides a ligand contact to Mg(2+). ATP is bound by residues 100–103 (EGAG) and 184–186 (PLL).

Belongs to the dethiobiotin synthetase family. As to quaternary structure, homodimer. The cofactor is Mg(2+).

It is found in the cytoplasm. It carries out the reaction (7R,8S)-7,8-diammoniononanoate + CO2 + ATP = (4R,5S)-dethiobiotin + ADP + phosphate + 3 H(+). It functions in the pathway cofactor biosynthesis; biotin biosynthesis; biotin from 7,8-diaminononanoate: step 1/2. Functionally, catalyzes a mechanistically unusual reaction, the ATP-dependent insertion of CO2 between the N7 and N8 nitrogen atoms of 7,8-diaminopelargonic acid (DAPA, also called 7,8-diammoniononanoate) to form a ureido ring. This chain is ATP-dependent dethiobiotin synthetase BioD, found in Brucella melitensis biotype 2 (strain ATCC 23457).